A 446-amino-acid chain; its full sequence is DNA repair protein RadA (446 aa).

A C4-type zinc finger spans residues C10–C27. G91–S98 is a binding site for ATP. A RadA KNRFG motif motif is present at residues K250–G254. A lon-protease-like region spans residues E349 to R446.

The protein belongs to the RecA family. RadA subfamily.

Functionally, DNA-dependent ATPase involved in processing of recombination intermediates, plays a role in repairing DNA breaks. Stimulates the branch migration of RecA-mediated strand transfer reactions, allowing the 3' invading strand to extend heteroduplex DNA faster. Binds ssDNA in the presence of ADP but not other nucleotides, has ATPase activity that is stimulated by ssDNA and various branched DNA structures, but inhibited by SSB. Does not have RecA's homology-searching function. The protein is DNA repair protein RadA of Rickettsia felis (strain ATCC VR-1525 / URRWXCal2) (Rickettsia azadi).